Reading from the N-terminus, the 338-residue chain is Lipoate-protein ligase A (338 aa).

The region spanning 29 to 216 is the BPL/LPL catalytic domain; it reads PATQRVLFLW…AFFAHYGERV (188 aa). Residues arginine 71, 76 to 79, and lysine 134 each bind ATP; that span reads GAVF. Lysine 134 is a (R)-lipoate binding site.

The protein belongs to the LplA family. In terms of assembly, monomer.

It is found in the cytoplasm. The catalysed reaction is L-lysyl-[lipoyl-carrier protein] + (R)-lipoate + ATP = N(6)-[(R)-lipoyl]-L-lysyl-[lipoyl-carrier protein] + AMP + diphosphate + H(+). The protein operates within protein modification; protein lipoylation via exogenous pathway; protein N(6)-(lipoyl)lysine from lipoate: step 1/2. It participates in protein modification; protein lipoylation via exogenous pathway; protein N(6)-(lipoyl)lysine from lipoate: step 2/2. Catalyzes both the ATP-dependent activation of exogenously supplied lipoate to lipoyl-AMP and the transfer of the activated lipoyl onto the lipoyl domains of lipoate-dependent enzymes. The protein is Lipoate-protein ligase A of Salmonella typhimurium (strain LT2 / SGSC1412 / ATCC 700720).